The primary structure comprises 488 residues: Serine/threonine-protein kinase haspin homolog hrk1 (488 aa).

The Protein kinase domain maps to 156–488 (TFEIQKIGEA…SLLNWVRQKY (333 aa)). ATP-binding positions include 162–170 (IGEASYSEV) and K184. The active-site Proton acceptor is the D305.

Belongs to the protein kinase superfamily. Ser/Thr protein kinase family. Haspin subfamily. Interacts with pds5 and swi6.

The protein localises to the cytoplasm. Its subcellular location is the chromosome. It catalyses the reaction L-seryl-[protein] + ATP = O-phospho-L-seryl-[protein] + ADP + H(+). The enzyme catalyses L-threonyl-[protein] + ATP = O-phospho-L-threonyl-[protein] + ADP + H(+). Functionally, serine/threonine haspin-like protein kinase involved in cell cycle regulation. Acts in chromosomal passenger complex (CPC) targeting to centromeres by phosphorylating histone H3 at 'Thr3' (H3T3ph). The chain is Serine/threonine-protein kinase haspin homolog hrk1 (hrk1) from Schizosaccharomyces pombe (strain 972 / ATCC 24843) (Fission yeast).